The sequence spans 306 residues: Recombination-associated protein RdgC (306 aa).

The protein belongs to the RdgC family.

Its subcellular location is the cytoplasm. The protein localises to the nucleoid. Its function is as follows. May be involved in recombination. The polypeptide is Recombination-associated protein RdgC (Pseudomonas fluorescens (strain SBW25)).